Reading from the N-terminus, the 244-residue chain is 1-(5-phosphoribosyl)-5-[(5-phosphoribosylamino)methylideneamino] imidazole-4-carboxamide isomerase (244 aa).

The Proton acceptor role is filled by Asp-10. The Proton donor role is filled by Asp-132.

The protein belongs to the HisA/HisF family.

The protein localises to the cytoplasm. The enzyme catalyses 1-(5-phospho-beta-D-ribosyl)-5-[(5-phospho-beta-D-ribosylamino)methylideneamino]imidazole-4-carboxamide = 5-[(5-phospho-1-deoxy-D-ribulos-1-ylimino)methylamino]-1-(5-phospho-beta-D-ribosyl)imidazole-4-carboxamide. Its pathway is amino-acid biosynthesis; L-histidine biosynthesis; L-histidine from 5-phospho-alpha-D-ribose 1-diphosphate: step 4/9. This is 1-(5-phosphoribosyl)-5-[(5-phosphoribosylamino)methylideneamino] imidazole-4-carboxamide isomerase from Xanthomonas campestris pv. campestris (strain 8004).